Reading from the N-terminus, the 149-residue chain is Arginine repressor (149 aa).

This sequence belongs to the ArgR family.

Its subcellular location is the cytoplasm. The protein operates within amino-acid biosynthesis; L-arginine biosynthesis [regulation]. Regulates arginine biosynthesis genes. The protein is Arginine repressor of Geobacillus sp. (strain WCH70).